Here is a 194-residue protein sequence, read N- to C-terminus: uncharacterized protein (194 aa).

The N-terminal stretch at 1 to 15 (MFVLSIALLSCTTLC) is a signal peptide. The 86-residue stretch at 49–134 (CPQGLHADAI…KATYYEKIRC (86 aa)) folds into the PAN domain. Cystine bridges form between C49–C134 and C79–C106.

This is an uncharacterized protein from Caenorhabditis elegans.